A 391-amino-acid polypeptide reads, in one-letter code: Apolipoprotein A-IV (391 aa).

An N-terminal signal peptide occupies residues Met-1–Ala-20. 13 tandem repeats follow at residues Asp-33–Val-54, Thr-60–Val-81, Pro-82–Gln-103, Pro-115–Arg-136, Pro-137–Thr-158, Pro-159–Val-180, Pro-181–Thr-202, Pro-203–Ala-224, Pro-225–Lys-246, Lys-247–Ala-268, Pro-269–Gln-286, Lys-287–Glu-308, and Pro-309–Gly-330. Residues Asp-33–Gly-330 form a 13 X 22 AA approximate tandem repeats region. Ser-333 is modified (phosphoserine). A disordered region spans residues Phe-354–Ser-391. The span at Pro-371 to Ser-391 shows a compositional bias: low complexity.

It belongs to the apolipoprotein A1/A4/E family. As to quaternary structure, homodimer. In terms of tissue distribution, secreted in plasma.

It is found in the secreted. Its function is as follows. May have a role in chylomicrons and VLDL secretion and catabolism. Required for efficient activation of lipoprotein lipase by ApoC-II; potent activator of LCAT. Apoa-IV is a major component of HDL and chylomicrons. The protein is Apolipoprotein A-IV (Apoa4) of Rattus norvegicus (Rat).